The primary structure comprises 176 residues: Large ribosomal subunit protein uL16 (176 aa).

The protein belongs to the universal ribosomal protein uL16 family.

This chain is Large ribosomal subunit protein uL16, found in Picrophilus torridus (strain ATCC 700027 / DSM 9790 / JCM 10055 / NBRC 100828 / KAW 2/3).